A 388-amino-acid polypeptide reads, in one-letter code: Protein-glutamate methylesterase/protein-glutamine glutaminase 1 (388 aa).

Positions 4–121 (QVLVVDDSSF…ATNKDEAIRL (118 aa)) constitute a Response regulatory domain. Asp-55 carries the post-translational modification 4-aspartylphosphate. The interval 149–190 (SARAGLSSTSPTLGSSTLGRSPASGLASSASRNSPTVSTPAS) is disordered. A compositionally biased stretch (low complexity) spans 153–169 (GLSSTSPTLGSSTLGRS). Polar residues predominate over residues 174 to 189 (LASSASRNSPTVSTPA). One can recognise a CheB-type methylesterase domain in the interval 188–388 (PASAIRASGK…EAILKESGRG (201 aa)). Residues Ser-207, His-234, and Asp-330 contribute to the active site.

Belongs to the CheB family. In terms of processing, phosphorylated by CheA. Phosphorylation of the N-terminal regulatory domain activates the methylesterase activity.

The protein resides in the cytoplasm. The enzyme catalyses [protein]-L-glutamate 5-O-methyl ester + H2O = L-glutamyl-[protein] + methanol + H(+). It carries out the reaction L-glutaminyl-[protein] + H2O = L-glutamyl-[protein] + NH4(+). Its function is as follows. Involved in chemotaxis. Part of a chemotaxis signal transduction system that modulates chemotaxis in response to various stimuli. Catalyzes the demethylation of specific methylglutamate residues introduced into the chemoreceptors (methyl-accepting chemotaxis proteins or MCP) by CheR. Also mediates the irreversible deamidation of specific glutamine residues to glutamic acid. The protein is Protein-glutamate methylesterase/protein-glutamine glutaminase 1 of Shewanella denitrificans (strain OS217 / ATCC BAA-1090 / DSM 15013).